We begin with the raw amino-acid sequence, 495 residues long: Probable aspartic-type endopeptidase OPSB (495 aa).

The signal sequence occupies residues Met1 to Thr19. Positions Tyr73–Ala408 constitute a Peptidase A1 domain. A glycan (N-linked (GlcNAc...) asparagine) is linked at Asn76. The active site involves Asp91. A glycan (N-linked (GlcNAc...) asparagine) is linked at Asn136. The active site involves Asp290. N-linked (GlcNAc...) asparagine glycosylation is present at Asn413. A disordered region spans residues Ala447–Gln470. Residue Ala467 is the site of GPI-anchor amidated alanine attachment. The propeptide at Ala468–Met495 is removed in mature form.

It belongs to the peptidase A1 family.

The protein localises to the cell membrane. Probable GPI-anchored aspartic-type endopeptidase which contributes to virulence. The polypeptide is Probable aspartic-type endopeptidase OPSB (OPSB) (Arthroderma benhamiae (strain ATCC MYA-4681 / CBS 112371) (Trichophyton mentagrophytes)).